We begin with the raw amino-acid sequence, 223 residues long: Neurotrophic factor BDNF precursor form (223 aa).

Positions 1 to 5 (SCMKA) are cleaved as a signal peptide. The propeptide occupies 6–114 (APMKEISIRG…AANMSMRVRR (109 aa)). N-linked (GlcNAc...) asparagine glycosylation is present at asparagine 107. 2 disulfides stabilise this stretch: cysteine 127-cysteine 194 and cysteine 172-cysteine 223.

Belongs to the NGF-beta family.

The protein resides in the secreted. Functionally, promotes the survival of neuronal populations that are all located either in the central nervous system or directly connected to it. This is Neurotrophic factor BDNF precursor form (BDNF) from Acrochordus javanicus (Javan wart snake).